A 109-amino-acid polypeptide reads, in one-letter code: Large ribosomal subunit protein eL30A (109 aa).

It belongs to the eukaryotic ribosomal protein eL30 family. As to quaternary structure, component of the large ribosomal subunit (LSU). Mature yeast ribosomes consist of a small (40S) and a large (60S) subunit. The 40S small subunit contains 1 molecule of ribosomal RNA (18S rRNA) and at least 33 different proteins. The large 60S subunit contains 3 rRNA molecules (25S, 5.8S and 5S rRNA) and at least 46 different proteins.

Its subcellular location is the cytoplasm. Functionally, component of the ribosome, a large ribonucleoprotein complex responsible for the synthesis of proteins in the cell. The small ribosomal subunit (SSU) binds messenger RNAs (mRNAs) and translates the encoded message by selecting cognate aminoacyl-transfer RNA (tRNA) molecules. The large subunit (LSU) contains the ribosomal catalytic site termed the peptidyl transferase center (PTC), which catalyzes the formation of peptide bonds, thereby polymerizing the amino acids delivered by tRNAs into a polypeptide chain. The nascent polypeptides leave the ribosome through a tunnel in the LSU and interact with protein factors that function in enzymatic processing, targeting, and the membrane insertion of nascent chains at the exit of the ribosomal tunnel. This chain is Large ribosomal subunit protein eL30A (rpl3001), found in Schizosaccharomyces pombe (strain 972 / ATCC 24843) (Fission yeast).